Here is an 822-residue protein sequence, read N- to C-terminus: MGFGSDLKNSHEAVLKLQDWELRLLETVKKFMALRIKSDKEYASTLQNLCNQVDKESTVQMNYVSNVSKSWLLMIQQTEQLSRIMKTHAEDLNSGPLHRLTMMIKDKQQVKKSYIGVHQQIEAEMIKVTKTELEKLKCSYRQLIKEMNSAKEKYKEALAKGKETEKAKERYDKATMKLHMLHNQYVLALKGAQLHQNQYYDITLPLLLDSLQKMQEEMIKALKGIFDEYSQITSLVTEEIVNVHKEIQMSVEQIDPSTEYNNFIDVHRTTAAKEQEIEFDTSLLEENENLQANEIMWNNLTAESLQVMLKTLAEELMQTQQMLLNKEEAVLELEKRIEESSETCEKKSDIVLLLSQKQALEELKQSVQQLRCTEAKFSAQKELLEQKVQENDGKEPPPVVNYEEDARSVTSMERKERLSKFESIRHSIAGIIRSPKSALGSSALSDMISISEKPLAEQDWYHGAIPRIEAQELLKKQGDFLVRESHGKPGEYVLSVYSDGQRRHFIIQYVDNMYRFEGTGFSNIPQLIDHHYTTKQVITKKSGVVLLNPIPKDKKWILSHEDVILGELLGKGNFGEVYKGTLKDKTSVAVKTCKEDLPQELKIKFLQEAKILKQYDHPNIVKLIGVCTQRQPVYIIMELVSGGDFLTFLRRKKDELKLKQLVKFSLDAAAGMLYLESKNCIHRDLAARNCLVGENNVLKISDFGMSRQEDGGVYSSSGLKQIPIKWTAPEALNYGRYSSESDVWSFGILLWETFSLGVCPYPGMTNQQAREQVERGYRMSAPQHCPEDISKIMMKCWDYKPENRPKFSELQKELTIIKRKLT.

The F-BAR domain occupies 1–259; it reads MGFGSDLKNS…SVEQIDPSTE (259 aa). The interval 1–300 is important for interaction with membranes containing phosphoinositides; that stretch reads MGFGSDLKNS…QANEIMWNNL (300 aa). 2 coiled-coil regions span residues 123-185 and 301-390; these read AEMI…HNQY and TAES…KVQE. At Tyr402 the chain carries Phosphotyrosine. Position 434 is a phosphoserine (Ser434). The SH2 domain occupies 460-550; it reads WYHGAIPRIE…KSGVVLLNPI (91 aa). The Protein kinase domain occupies 563-816; it reads VILGELLGKG…FSELQKELTI (254 aa). ATP-binding positions include 569 to 577 and Lys591; that span reads LGKGNFGEV. Tyr615 carries the post-translational modification Phosphotyrosine; by autocatalysis. Asp684 serves as the catalytic Proton acceptor. Tyr714 bears the Phosphotyrosine; by autocatalysis mark.

The protein belongs to the protein kinase superfamily. Tyr protein kinase family. Fes/fps subfamily. Homotrimer. Interacts with ARHGDIA, IRS1, JAK1, NRP1, PIK3R1, PLEC and TMF1. Interacts with PPP1CA and regulates its phosphorylation at 'Thr-320'. Interacts with CTNND1, EGFR, FLT3, PECAM1, PDGFR and STAT3. Interacts (via SH2 domain) with CTTN. Interacts with HSP90; this stabilizes phosphorylated FER and protects FER against proteasomal degradation. Component of a complex that contains at least FER, CTTN and PTK2/FAK1. In terms of processing, autophosphorylated. Polyubiquitinated; this leads to proteasomal degradation. In terms of tissue distribution, isoform 1 is detected in normal colon and in fibroblasts (at protein level). Isoform 3 is detected in normal testis, in colon carcinoma-derived metastases in lung, liver and ovary, and in colon carcinoma and hepato carcinoma cell lines (at protein level). Isoform 3 is not detected in normal colon or in normal fibroblasts (at protein level). Widely expressed.

It localises to the cytoplasm. Its subcellular location is the cytoskeleton. It is found in the cell membrane. The protein resides in the cell projection. The protein localises to the cell junction. It localises to the membrane. Its subcellular location is the nucleus. It is found in the cell cortex. The catalysed reaction is L-tyrosyl-[protein] + ATP = O-phospho-L-tyrosyl-[protein] + ADP + H(+). Activated by phosphatidic acid binding. Activated by hydrogen peroxide (in vitro). Activated by reactive oxygen species (ROS). Its function is as follows. Tyrosine-protein kinase that acts downstream of cell surface receptors for growth factors and plays a role in the regulation of the actin cytoskeleton, microtubule assembly, lamellipodia formation, cell adhesion, cell migration and chemotaxis. Acts downstream of EGFR, KIT, PDGFRA and PDGFRB. Acts downstream of EGFR to promote activation of NF-kappa-B and cell proliferation. May play a role in the regulation of the mitotic cell cycle. Plays a role in the insulin receptor signaling pathway and in activation of phosphatidylinositol 3-kinase. Acts downstream of the activated FCER1 receptor and plays a role in FCER1 (high affinity immunoglobulin epsilon receptor)-mediated signaling in mast cells. Plays a role in the regulation of mast cell degranulation. Plays a role in leukocyte recruitment and diapedesis in response to bacterial lipopolysaccharide (LPS). Plays a role in synapse organization, trafficking of synaptic vesicles, the generation of excitatory postsynaptic currents and neuron-neuron synaptic transmission. Plays a role in neuronal cell death after brain damage. Phosphorylates CTTN, CTNND1, PTK2/FAK1, GAB1, PECAM1 and PTPN11. May phosphorylate JUP and PTPN1. Can phosphorylate STAT3, but the biological relevance of this depends on cell type and stimulus. The sequence is that of Tyrosine-protein kinase Fer (FER) from Homo sapiens (Human).